The sequence spans 228 residues: UPF0173 metal-dependent hydrolase Dred_1740 (228 aa).

It belongs to the UPF0173 family.

The polypeptide is UPF0173 metal-dependent hydrolase Dred_1740 (Desulforamulus reducens (strain ATCC BAA-1160 / DSM 100696 / MI-1) (Desulfotomaculum reducens)).